Reading from the N-terminus, the 398-residue chain is Immunoglobulin heavy constant alpha 1 (398 aa).

At Ala1 to Thr364 the chain is on the extracellular side. In terms of domain architecture, Ig-like 1 spans Pro6 to Thr98. 2 disulfide bridges follow: Cys26/Cys85 and Cys77/Cys101. The interval Asp96–Cys122 is disordered. A compositionally biased stretch (pro residues) spans Cys101 to Ser119. O-linked (GalNAc...) serine glycosylation occurs at Ser105. Residues Thr106 and Thr109 are each glycosylated (O-linked (GalNAc...) threonine). Residues Ser111 and Ser113 are each glycosylated (O-linked (GalNAc...) serine). Residues Thr114 and Thr117 are each glycosylated (O-linked (GalNAc...) threonine). O-linked (GalNAc...) serine glycosylation is found at Ser119 and Ser121. 3 disulfide bridges follow: Cys123-Cys180, Cys147-Cys204, and Cys250-Cys313. Ig-like domains follow at residues Pro125–Ser220 and Pro228–Asp330. A glycan (N-linked (GlcNAc...) (complex) asparagine) is linked at Asn144. N-linked (GlcNAc...) (complex) asparagine glycosylation is present at Pro340. Glu352 is a binding site for 3-hydroxy-L-kynurenine. A helical transmembrane segment spans residues Ile365 to Val383. Over Thr384 to Tyr398 the chain is Cytoplasmic.

Immunoglobulins are composed of two identical heavy chains and two identical light chains; disulfide-linked. Monomeric or polymeric. Part of the secretory IgA (sIgA) complex that consists of two, four or five IgA monomers, and two additional non-Ig polypeptides, namely the JCHAIN and the secretory component (the proteolytic product of PIGR). 3-Hydroxykynurenine, an oxidized tryptophan metabolite that is common in biological fluids, reacts with alpha-1-microglobulin to form heterogeneous polycyclic chromophores including hydroxanthommatin. The chromophore reacts with accessible cysteines forming non-reducible thioether cross-links with Ig alpha-1 chain C region Cys-352. Post-translationally, N- and O-glycosylated. N-glycan at Asn-144: Hex5HexNAc4.

It is found in the secreted. It localises to the cell membrane. Constant region of immunoglobulin heavy chains. Immunoglobulins, also known as antibodies, are membrane-bound or secreted glycoproteins produced by B lymphocytes. In the recognition phase of humoral immunity, the membrane-bound immunoglobulins serve as receptors which, upon binding of a specific antigen, trigger the clonal expansion and differentiation of B lymphocytes into immunoglobulins-secreting plasma cells. Secreted immunoglobulins mediate the effector phase of humoral immunity, which results in the elimination of bound antigens. The antigen binding site is formed by the variable domain of one heavy chain, together with that of its associated light chain. Thus, each immunoglobulin has two antigen binding sites with remarkable affinity for a particular antigen. The variable domains are assembled by a process called V-(D)-J rearrangement and can then be subjected to somatic hypermutations which, after exposure to antigen and selection, allow affinity maturation for a particular antigen. Ig alpha is the major immunoglobulin class in body secretions. The polypeptide is Immunoglobulin heavy constant alpha 1 (Homo sapiens (Human)).